A 556-amino-acid chain; its full sequence is Glycosyl hydrolase 5 family protein (556 aa).

Positions 1–28 (MTSAGVAPTALRLLTALLLLLVAAPSHS) are cleaved as a signal peptide. Residues N102 and N113 are each glycosylated (N-linked (GlcNAc...) asparagine). The active-site Proton donor/acceptor is E208. N-linked (GlcNAc...) asparagine glycans are attached at residues N212, N290, and N307. The Nucleophile role is filled by E473. N474 and N479 each carry an N-linked (GlcNAc...) asparagine glycan.

The protein belongs to the glycosyl hydrolase 5 (cellulase A) family. Post-translationally, glycosylated.

Functionally, may have glycosyl hydrolase activity. The sequence is that of Glycosyl hydrolase 5 family protein from Chamaecyparis obtusa (Hinoki false-cypress).